Here is a 403-residue protein sequence, read N- to C-terminus: Eukaryotic initiation factor 4A (403 aa).

A disordered region spans residues 1 to 20; sequence MDDRNEIPQDGPASMEPEGV. The Q motif signature appears at 30–58; it reads DNFDDMNLREELLRGIYGYGFEKPSAIQQ. The Helicase ATP-binding domain maps to 61 to 231; it reads IIPCVRGRDV…RCFMRDPVSI (171 aa). 74–81 is an ATP binding site; it reads AQSGTGKT. Positions 179 to 182 match the DEAD box motif; the sequence is DEAD. The Helicase C-terminal domain maps to 242–403; sequence GIKQFYVNVK…EMPANIADLI (162 aa).

This sequence belongs to the DEAD box helicase family. eIF4A subfamily. In terms of assembly, eIF4F is a multi-subunit complex, the composition of which varies with external and internal environmental conditions. It is composed of at least eIF4A, eIF4E1 and eIF4G1. Interacts with tud and vas. Interacts (via multiple contacts) with bam; the interaction is direct.

It localises to the cytoplasm. Its subcellular location is the cytoplasmic ribonucleoprotein granule. It carries out the reaction ATP + H2O = ADP + phosphate + H(+). ATP-dependent RNA helicase which is a subunit of the eIF4F complex involved in cap recognition and is required for mRNA binding to ribosome. In the current model of translation initiation, eIF4A unwinds RNA secondary structures in the 5'-UTR of mRNAs which is necessary to allow efficient binding of the small ribosomal subunit, and subsequent scanning for the initiator codon. As a result, promotes cell proliferation and growth. Binds and antagonises the bam-bgcn complex; probably prevents bam mediated translational repression of shg/E-cadherin. Involved in germ cell formation. Involved in germline stem cell maintenance and proliferation; prevents differentiation. The sequence is that of Eukaryotic initiation factor 4A from Drosophila melanogaster (Fruit fly).